Consider the following 272-residue polypeptide: Dermonecrotic toxin SpeSicTox-betaIB1a (272 aa).

The active site involves His-5. The Mg(2+) site is built by Glu-25 and Asp-27. The active-site Nucleophile is the His-41. 2 disulfide bridges follow: Cys-45–Cys-51 and Cys-47–Cys-191. Asp-85 is a Mg(2+) binding site.

It belongs to the arthropod phospholipase D family. Class II subfamily. Requires Mg(2+) as cofactor. In terms of tissue distribution, expressed by the venom gland.

The protein resides in the secreted. The catalysed reaction is an N-(acyl)-sphingosylphosphocholine = an N-(acyl)-sphingosyl-1,3-cyclic phosphate + choline. The enzyme catalyses an N-(acyl)-sphingosylphosphoethanolamine = an N-(acyl)-sphingosyl-1,3-cyclic phosphate + ethanolamine. It catalyses the reaction a 1-acyl-sn-glycero-3-phosphocholine = a 1-acyl-sn-glycero-2,3-cyclic phosphate + choline. It carries out the reaction a 1-acyl-sn-glycero-3-phosphoethanolamine = a 1-acyl-sn-glycero-2,3-cyclic phosphate + ethanolamine. Functionally, dermonecrotic toxins cleave the phosphodiester linkage between the phosphate and headgroup of certain phospholipids (sphingolipid and lysolipid substrates), forming an alcohol (often choline) and a cyclic phosphate. This toxin acts on sphingomyelin (SM). It may also act on ceramide phosphoethanolamine (CPE), lysophosphatidylcholine (LPC) and lysophosphatidylethanolamine (LPE), but not on lysophosphatidylserine (LPS), and lysophosphatidylglycerol (LPG). It acts by transphosphatidylation, releasing exclusively cyclic phosphate products as second products. Induces dermonecrosis, hemolysis, increased vascular permeability, edema, inflammatory response, and platelet aggregation. The polypeptide is Dermonecrotic toxin SpeSicTox-betaIB1a (Sicarius peruensis (Six-eyed sand spider)).